A 249-amino-acid polypeptide reads, in one-letter code: Ribosomal RNA small subunit methyltransferase J (249 aa).

Residues 99–100 (RD), 115–116 (ER), 151–152 (SS), and Asp169 contribute to the S-adenosyl-L-methionine site.

The protein belongs to the methyltransferase superfamily. RsmJ family.

It is found in the cytoplasm. It catalyses the reaction guanosine(1516) in 16S rRNA + S-adenosyl-L-methionine = N(2)-methylguanosine(1516) in 16S rRNA + S-adenosyl-L-homocysteine + H(+). In terms of biological role, specifically methylates the guanosine in position 1516 of 16S rRNA. The protein is Ribosomal RNA small subunit methyltransferase J of Shewanella oneidensis (strain ATCC 700550 / JCM 31522 / CIP 106686 / LMG 19005 / NCIMB 14063 / MR-1).